Reading from the N-terminus, the 172-residue chain is Outer-membrane lipoprotein carrier protein (172 aa).

The first 16 residues, 1 to 16 (MRIALLWVAFGALALA), serve as a signal peptide directing secretion.

It belongs to the LolA family. As to quaternary structure, monomer.

Its subcellular location is the periplasm. Functionally, participates in the translocation of lipoproteins from the inner membrane to the outer membrane. Only forms a complex with a lipoprotein if the residue after the N-terminal Cys is not an aspartate (The Asp acts as a targeting signal to indicate that the lipoprotein should stay in the inner membrane). The chain is Outer-membrane lipoprotein carrier protein from Wolinella succinogenes (strain ATCC 29543 / DSM 1740 / CCUG 13145 / JCM 31913 / LMG 7466 / NCTC 11488 / FDC 602W) (Vibrio succinogenes).